A 216-amino-acid polypeptide reads, in one-letter code: Fibroblast growth factor 17 (216 aa).

The N-terminal stretch at 1 to 22 is a signal peptide; it reads MGAARLLPNLTLCLQLLILCCQ. The N-linked (GlcNAc...) asparagine glycan is linked to Asn137. Residues 195–216 are disordered; it reads FEFVGSAPTRRTKRTRRPQSQT. Basic residues predominate over residues 204-216; the sequence is RRTKRTRRPQSQT.

It belongs to the heparin-binding growth factors family. As to quaternary structure, interacts with FGFR3 and FGFR4.

The protein resides in the secreted. Its function is as follows. Plays an important role in the regulation of embryonic development and as signaling molecule in the induction and patterning of the embryonic brain. Required for normal brain development. The sequence is that of Fibroblast growth factor 17 (Fgf17) from Mus musculus (Mouse).